A 156-amino-acid polypeptide reads, in one-letter code: Ecotin (156 aa).

Positions 1-19 (MKALLIAAGVAALSSTAMA) are cleaved as a signal peptide. Cysteine 65 and cysteine 102 form a disulfide bridge.

The protein belongs to the protease inhibitor I11 (ecotin) family. Homodimer.

Its subcellular location is the periplasm. Its function is as follows. General inhibitor of family S1 serine proteases. This chain is Ecotin, found in Pseudomonas aeruginosa (strain LESB58).